We begin with the raw amino-acid sequence, 649 residues long: tRNA-guanine(15) transglycosylase (649 aa).

The active-site Nucleophile is Asp-88. The substrate site is built by Asp-123 and Ala-194. Zn(2+)-binding residues include Cys-280, Cys-282, and Cys-285. In terms of domain architecture, PUA spans 573 to 648; it reads NYRIVIDSSV…VAATLRGGIK (76 aa).

This sequence belongs to the archaeosine tRNA-ribosyltransferase family. The cofactor is Zn(2+).

The enzyme catalyses guanosine(15) in tRNA + 7-cyano-7-deazaguanine = 7-cyano-7-carbaguanosine(15) in tRNA + guanine. It participates in tRNA modification; archaeosine-tRNA biosynthesis. Functionally, exchanges the guanine residue with 7-cyano-7-deazaguanine (preQ0) at position 15 in the dihydrouridine loop (D-loop) of archaeal tRNAs. This is tRNA-guanine(15) transglycosylase from Methanococcus maripaludis (strain C5 / ATCC BAA-1333).